An 82-amino-acid chain; its full sequence is Putative membrane protein insertion efficiency factor (82 aa).

The protein belongs to the UPF0161 family.

It localises to the cell inner membrane. Its function is as follows. Could be involved in insertion of integral membrane proteins into the membrane. The protein is Putative membrane protein insertion efficiency factor of Rickettsia felis (strain ATCC VR-1525 / URRWXCal2) (Rickettsia azadi).